The sequence spans 400 residues: Probable splicing factor YJU2B (400 aa).

The disordered stretch occupies residues 1–26 (MGERKGVNKYYPPDFNPEKHGSLNRY). S40 carries the post-translational modification Phosphoserine. A coiled-coil region spans residues 182–214 (LNSMLRKRFREKKKAMQEEEERDQALQAKASLA). The disordered stretch occupies residues 255-400 (WFPSTPGASA…VADYSGSESE (146 aa)). Polar residues predominate over residues 283–292 (RRATPTSSPV). Position 310 is a phosphoserine (S310). Residues 327–341 (EGTNQNRPVSPQDCS) show a composition bias toward polar residues. Positions 364 to 380 (PQPPPDTSPEAPNPQDT) are enriched in pro residues.

The protein belongs to the CWC16 family.

It is found in the nucleus. Its function is as follows. May be involved in mRNA splicing. In Bos taurus (Bovine), this protein is Probable splicing factor YJU2B (YJU2B).